The following is a 420-amino-acid chain: Adenylosuccinate synthetase (420 aa).

GTP contacts are provided by residues 11 to 17 and 39 to 41; these read GDEGKGK and GHT. The active-site Proton acceptor is Asp-12. The Mg(2+) site is built by Asp-12 and Gly-39. Residues 12 to 15, 37 to 40, Thr-129, Arg-143, Asn-218, Thr-233, and Arg-297 contribute to the IMP site; these read DEGK and NAGH. His-40 functions as the Proton donor in the catalytic mechanism. 293–299 is a substrate binding site; sequence VTTGRKR. Residues Arg-299, 325–327, and 407–409 each bind GTP; these read KLD and GTG.

Belongs to the adenylosuccinate synthetase family. Homodimer. It depends on Mg(2+) as a cofactor.

It is found in the cytoplasm. It carries out the reaction IMP + L-aspartate + GTP = N(6)-(1,2-dicarboxyethyl)-AMP + GDP + phosphate + 2 H(+). The protein operates within purine metabolism; AMP biosynthesis via de novo pathway; AMP from IMP: step 1/2. Functionally, plays an important role in the de novo pathway and in the salvage pathway of purine nucleotide biosynthesis. Catalyzes the first committed step in the biosynthesis of AMP from IMP. The chain is Adenylosuccinate synthetase from Uncinocarpus reesii (strain UAMH 1704).